The chain runs to 580 residues: MSGSKQGSEKASITSLIDSEEQGDEATSVSTQNQSPKTQITQTENVEVQNSDLKVTENKPKNTEMKPTDPNTNASTTENTPITTSNAQVSEKSEKTVPAWMREPEEAQNRYDRYVPRVDNRRRGEPRVAEVRQDPRYAKYLRQDQEERRIRRPDDEYEGDHKRRRPEMVTQFDDRRQGTRKNHPGQAGQSESEENGDEQQGDDEEETPGNEEPVEAQPYSRLATSVQSTQHYHTFQSHIANKENKDINSIVRSHYNQRTIQSKMQGSRTKSPIYKLRNFNNAVKYMLLGNHVRKNPNPGSPTVILDMCCGKGGDLNKAEFVGADQYVGIDISDASVKEAFHRYRRNKARFIPRDGGRAGQRDSRKYNFEACFATGDCFQQSIPEILEPNFPGIVNGLFPVDCVSIQFSMHYSFESEERVRTMLNNVSKSLRPGGTFVGTIPSSDFIRDKIVNKDFLPGTNNKFGNELYSVTFDRTPPSDGIFRPPFGNKYDYFLKDAVDNVPEYVVPFEVFRSMCEEVGLTLRYKKNFIEIFNQEIPKYFHKLNRNLVDGMKRADGKYGAEGAEKEAVSFYLGFAFEKLG.

Polar residues-rich tracts occupy residues methionine 1 to isoleucine 17 and glutamate 25 to leucine 53. Residues methionine 1–leucine 222 are disordered. The segment covering lysine 54–proline 67 has biased composition (basic and acidic residues). Positions aspartate 69 to serine 90 are enriched in polar residues. A compositionally biased stretch (basic and acidic residues) spans arginine 102–aspartate 154. Over residues glutamate 191–valine 214 the composition is skewed to acidic residues. The mRNA cap 0 methyltransferase domain maps to serine 271–leucine 579. Residue asparagine 280 to asparagine 281 coordinates mRNA. Residues lysine 284, cysteine 308, aspartate 330, aspartate 376, glutamine 406, and tyrosine 411 each coordinate S-adenosyl-L-methionine.

This sequence belongs to the class I-like SAM-binding methyltransferase superfamily. mRNA cap 0 methyltransferase family.

It localises to the nucleus. It catalyses the reaction a 5'-end (5'-triphosphoguanosine)-ribonucleoside in mRNA + S-adenosyl-L-methionine = a 5'-end (N(7)-methyl 5'-triphosphoguanosine)-ribonucleoside in mRNA + S-adenosyl-L-homocysteine. Functionally, responsible for methylating the 5'-cap structure of mRNAs. The polypeptide is mRNA cap guanine-N(7) methyltransferase (ABD1) (Meyerozyma guilliermondii (strain ATCC 6260 / CBS 566 / DSM 6381 / JCM 1539 / NBRC 10279 / NRRL Y-324) (Yeast)).